The chain runs to 427 residues: Putative zinc protease AlbF (427 aa).

His66 contacts Zn(2+). The active-site Proton acceptor is the Glu69. 2 residues coordinate Zn(2+): His70 and Glu142.

It belongs to the peptidase M16 family. It depends on Zn(2+) as a cofactor.

Its function is as follows. Required for production of the bacteriocin subtilosin. Could catalyze some step in the processing of presubtilosin. The sequence is that of Putative zinc protease AlbF (albF) from Bacillus subtilis.